A 193-amino-acid polypeptide reads, in one-letter code: Protein GrpE (193 aa).

The tract at residues 1-26 (MTKKHHKEQEEIQETIKTEAAEENVG) is disordered. Basic and acidic residues predominate over residues 7–20 (KEQEEIQETIKTEA).

This sequence belongs to the GrpE family. As to quaternary structure, homodimer.

It localises to the cytoplasm. Functionally, participates actively in the response to hyperosmotic and heat shock by preventing the aggregation of stress-denatured proteins, in association with DnaK and GrpE. It is the nucleotide exchange factor for DnaK and may function as a thermosensor. Unfolded proteins bind initially to DnaJ; upon interaction with the DnaJ-bound protein, DnaK hydrolyzes its bound ATP, resulting in the formation of a stable complex. GrpE releases ADP from DnaK; ATP binding to DnaK triggers the release of the substrate protein, thus completing the reaction cycle. Several rounds of ATP-dependent interactions between DnaJ, DnaK and GrpE are required for fully efficient folding. This Chlorobaculum parvum (strain DSM 263 / NCIMB 8327) (Chlorobium vibrioforme subsp. thiosulfatophilum) protein is Protein GrpE.